A 361-amino-acid polypeptide reads, in one-letter code: MNESRWTEWRILNMSSSIVNVSEHHSCPLGFGHYSVEDVCIFETVVIVLLTFLIISGNLTVIFVFHCAPLLHHYTTSYFIQTMAYADLLVGVTCLVPTLSLLHYSTGVHESLTCQVFGYIISVLKSVSMACLACISVDRYLAITKPLSYNQLVTPCRLRICIIMIWIYSCLIFLPSFFGWGKPGYHGDIFEWCATSWLTSAYFTCFIVCLLYAPAALVVCFTYFHIFKICRQHTKEINDRRARFPSHEVEASREAGHSPDRRYAMVLFRITSVFYMLWLPYIIYFLLESSRVLDNPTLSFLTTWLAISNSFCNCVIYSLSNSVFRLGLRRLSETMCTSCVCAKDQEAQDPKPRRRANSCSI.

Topologically, residues 1–44 are extracellular; that stretch reads MNESRWTEWRILNMSSSIVNVSEHHSCPLGFGHYSVEDVCIFET. Asn-2, Asn-13, and Asn-20 each carry an N-linked (GlcNAc...) asparagine glycan. The helical transmembrane segment at 45-65 threads the bilayer; it reads VVIVLLTFLIISGNLTVIFVF. The Cytoplasmic segment spans residues 66-81; sequence HCAPLLHHYTTSYFIQ. Residues 82-102 traverse the membrane as a helical segment; the sequence is TMAYADLLVGVTCLVPTLSLL. At 103–115 the chain is on the extracellular side; that stretch reads HYSTGVHESLTCQ. Cys-114 and Cys-193 form a disulfide bridge. The helical transmembrane segment at 116–136 threads the bilayer; the sequence is VFGYIISVLKSVSMACLACIS. Over 137 to 159 the chain is Cytoplasmic; it reads VDRYLAITKPLSYNQLVTPCRLR. The chain crosses the membrane as a helical span at residues 160-180; sequence ICIIMIWIYSCLIFLPSFFGW. The Extracellular portion of the chain corresponds to 181 to 205; sequence GKPGYHGDIFEWCATSWLTSAYFTC. Residues 206–226 form a helical membrane-spanning segment; that stretch reads FIVCLLYAPAALVVCFTYFHI. At 227-265 the chain is on the cytoplasmic side; sequence FKICRQHTKEINDRRARFPSHEVEASREAGHSPDRRYAM. The helical transmembrane segment at 266 to 286 threads the bilayer; that stretch reads VLFRITSVFYMLWLPYIIYFL. Residues 287–296 are Extracellular-facing; sequence LESSRVLDNP. A helical transmembrane segment spans residues 297 to 317; that stretch reads TLSFLTTWLAISNSFCNCVIY. Residues 318–361 are Cytoplasmic-facing; it reads SLSNSVFRLGLRRLSETMCTSCVCAKDQEAQDPKPRRRANSCSI.

This sequence belongs to the G-protein coupled receptor 1 family. As to expression, expressed in brain, especially in striatum. Expressed in the striatum, nucleus accumbens, and lateral globus pallidus.

Its subcellular location is the cell membrane. Its function is as follows. G- protein coupled receptor activated by antipsychotics reserpine leading to an increase in intracellular cAMP and its internalization. May play a role in locomotor activity through modulation of dopamine, NMDA and ADORA2A-induced locomotor activity. These behavioral changes are accompanied by modulation of the dopamine receptor signaling pathway in striatum. Modulates HTT level via cAMP-dependent but PKA independent mechanisms throught activation of RAB39B that translocates HTT to the endoplasmic reticulum, thus avoiding proteasome degradation. The protein is G-protein coupled receptor 52 of Mus musculus (Mouse).